The chain runs to 427 residues: Serine--tRNA ligase (427 aa).

231–233 (TAE) is a binding site for L-serine. 262–264 (RSE) is an ATP binding site. Glutamate 285 contacts L-serine. 349–352 (EISS) serves as a coordination point for ATP. Serine 385 is a binding site for L-serine.

Belongs to the class-II aminoacyl-tRNA synthetase family. Type-1 seryl-tRNA synthetase subfamily. As to quaternary structure, homodimer. The tRNA molecule binds across the dimer.

It localises to the cytoplasm. The catalysed reaction is tRNA(Ser) + L-serine + ATP = L-seryl-tRNA(Ser) + AMP + diphosphate + H(+). It carries out the reaction tRNA(Sec) + L-serine + ATP = L-seryl-tRNA(Sec) + AMP + diphosphate + H(+). The protein operates within aminoacyl-tRNA biosynthesis; selenocysteinyl-tRNA(Sec) biosynthesis; L-seryl-tRNA(Sec) from L-serine and tRNA(Sec): step 1/1. Functionally, catalyzes the attachment of serine to tRNA(Ser). Is also able to aminoacylate tRNA(Sec) with serine, to form the misacylated tRNA L-seryl-tRNA(Sec), which will be further converted into selenocysteinyl-tRNA(Sec). The protein is Serine--tRNA ligase of Brucella abortus (strain S19).